The sequence spans 156 residues: Small ribosomal subunit protein uS7c (156 aa).

It belongs to the universal ribosomal protein uS7 family. Part of the 30S ribosomal subunit.

It localises to the plastid. It is found in the chloroplast. In terms of biological role, one of the primary rRNA binding proteins, it binds directly to 16S rRNA where it nucleates assembly of the head domain of the 30S subunit. The polypeptide is Small ribosomal subunit protein uS7c (rps7) (Zamia furfuracea (Cardboard cycad)).